The sequence spans 830 residues: Dimethylglycine oxidase (830 aa).

FAD-binding positions include 14 to 15, 35 to 36, 45 to 48, Leu52, and Val174; these read IV, DQ, and STSH. Position 48 is a pros-8alpha-FAD histidine (His48). Residues His225 and Tyr259 contribute to the active site. FAD contacts are provided by residues Tyr259 and 360 to 363; that span reads VWVT. Residue Tyr539 participates in (6S)-5,6,7,8-tetrahydrofolate binding. Catalysis depends on Asp552, which acts as the For 5,10-methylenetetrahydrofolate synthesis activity. (6S)-5,6,7,8-tetrahydrofolate contacts are provided by residues Thr554, Gly566, and 658 to 660; that span reads ELY.

The protein belongs to the GcvT family. FAD serves as cofactor.

The enzyme catalyses N,N-dimethylglycine + O2 + H2O = sarcosine + formaldehyde + H2O2. It carries out the reaction N,N-dimethylglycine + (6S)-5,6,7,8-tetrahydrofolate + O2 = sarcosine + (6R)-5,10-methylene-5,6,7,8-tetrahydrofolate + H2O2. Catalyzes the oxidative demethylation of N,N-dimethylglycine to yield sarcosine, formaldehyde and hydrogen peroxide. The oxidation of dimethylglycine is coupled to the synthesis of 5,10-methylenetetrahydrofolate through an unusual substrate channeling mechanism. This channeling occurs by nonbiased diffusion of the iminium intermediate through a large solvent cavity connecting active site 1 (N-terminus) and active site 2 (C-terminus). The synthesis of 5,10-methylenetetrahydrofolate (at active site 2) prevents the accumulation of formaldehyde, formed by hydrolysis of the iminium intermediate product (at active site 1). Does not oxidize sarcosine. In Arthrobacter globiformis, this protein is Dimethylglycine oxidase (dmg).